Consider the following 137-residue polypeptide: Small ribosomal subunit protein uS12 (137 aa).

The interval Met-1–Leu-24 is disordered. Residue Asp-102 is modified to 3-methylthioaspartic acid.

This sequence belongs to the universal ribosomal protein uS12 family. As to quaternary structure, part of the 30S ribosomal subunit. Contacts proteins S8 and S17. May interact with IF1 in the 30S initiation complex.

Its function is as follows. With S4 and S5 plays an important role in translational accuracy. Functionally, interacts with and stabilizes bases of the 16S rRNA that are involved in tRNA selection in the A site and with the mRNA backbone. Located at the interface of the 30S and 50S subunits, it traverses the body of the 30S subunit contacting proteins on the other side and probably holding the rRNA structure together. The combined cluster of proteins S8, S12 and S17 appears to hold together the shoulder and platform of the 30S subunit. In Pediococcus pentosaceus (strain ATCC 25745 / CCUG 21536 / LMG 10740 / 183-1w), this protein is Small ribosomal subunit protein uS12.